Reading from the N-terminus, the 2092-residue chain is Nonribosomal peptide synthetase echPS (2092 aa).

The tract at residues 13-406 (FSQRCCQNPD…GRRDRVTKIR (394 aa)) is adenylation 1. One can recognise a Carrier 1 domain in the interval 524-600 (SGPLTIGQAI…SLIEKSRHET (77 aa)). O-(pantetheine 4'-phosphoryl)serine is present on serine 561. A disordered region spans residues 596–626 (SRHETEDTPDSSAFATRTPEESSMPTQGPVT). Residues 605–624 (DSSAFATRTPEESSMPTQGP) are compositionally biased toward polar residues. The condensation 1 stretch occupies residues 624–1017 (PVTPLQKRMV…YTSLLDAFLD (394 aa)). The tract at residues 1068–1446 (ASLYPTHVAV…GRKDRQVKVR (379 aa)) is adenylation 2. The Carrier 2 domain maps to 1544–1622 (IKTTHLEKLI…DLVILVAQQQ (79 aa)). Serine 1582 is subject to O-(pantetheine 4'-phosphoryl)serine. The tract at residues 1663–2047 (SQSQSTFNVS…EALLLECFRI (385 aa)) is condensation 2.

The protein belongs to the NRP synthetase family. It depends on pantetheine 4'-phosphate as a cofactor.

The enzyme catalyses L-tryptophan + L-alanine + 2 ATP = cyclo(L-tryptophyl-L-alanyl) + 2 ADP + 2 phosphate + 2 H(+). The protein operates within secondary metabolite biosynthesis. Its pathway is alkaloid biosynthesis. Its function is as follows. Nonribosomal peptide synthetase; part of the gene cluster that mediates the biosynthesis of echinulin family alkaloid. The pathway begins with the biosynthesis of the cyclic dipeptide cyclo-L-Trp-L-Ala (cyclo-TA) by the NRPS echPS via condensation of L-alanine and L-tryptophan. The prenyltransferase echPT1 then catalyzes the first prenylation step, a reverse prenylation reaction at C2, to yield preechinulin. Preechinulin is the substrate of the cytochrome P450 monooxygenase echP450 that catalyzes the formation of the double bond between C10 and C11 to produce neoechulin A. The unique prenyltransferase echPT2 functions as a competitive enzyme with echP450 for preechinulin metabolization and uses preechinulin for effective regiospecific prenylations. Preechinulin is prenylated by echPT2 at C5 or C7. C7-prenylation leads to accumulation of tardioxopiperazine B without further modification by echPT2. In contrast, the C5-prenylated tardioxopiperazine A can be prenylated again by echPT2, predominantly at C7 to form echinulin or less frequently at C4 to give variecolorin L. EchPT2 also accepts neoechilunin A to produce varlecolorin G (prenylation at C5) or isoechinulin A (prenylation at C7). EchPT2 further converts isoechinulin A into dehydroechinulin. Moreover, a yet unidentified enzyme can also convert neoechilunin A into neoechilunin B by introducing a double bond between positions C14 and C17 and thus provides a further substrate to echPT2 for C5 and C7 prenylation. In Aspergillus ruber (strain CBS 135680), this protein is Nonribosomal peptide synthetase echPS.